A 215-amino-acid polypeptide reads, in one-letter code: uncharacterized protein (215 aa).

Residues serine 114, aspartate 162, and histidine 194 each act as charge relay system in the active site.

Belongs to the AB hydrolase superfamily. AB hydrolase 2 family.

This is an uncharacterized protein from Rickettsia typhi (strain ATCC VR-144 / Wilmington).